Here is a 310-residue protein sequence, read N- to C-terminus: Serine protease 30 (310 aa).

Positions 1-21 (MESRARCIFLLLLQILTRARG) are cleaved as a signal peptide. A propeptide spans 22 to 36 (DILPSVCGHSRDAGK) (activation peptide). Positions 37–277 (IVGGQDALEG…YVDWIQRILA (241 aa)) constitute a Peptidase S1 domain. Cysteines 63 and 79 form a disulfide. Active-site charge relay system residues include His78 and Asp128. 3 disulfide bridges follow: Cys161-Cys235, Cys191-Cys214, and Cys225-Cys253. Ser229 acts as the Charge relay system in catalysis. Residues Asn238 and Asn279 are each glycosylated (N-linked (GlcNAc...) asparagine). Residue Ser281 is the site of GPI-anchor amidated serine attachment. Residues 282-310 (DAYGYHSSASAAYQMLLPVLLAVALPGSL) constitute a propeptide, removed in mature form.

Belongs to the peptidase S1 family. As to expression, expressed primarily in distal gut.

The protein resides in the cell membrane. Inhibited by aprotinin, leupeptin, benzamidine and soybean trypsin inhibitor. Partially inhibited by PMSF and DFP. In terms of biological role, selectively cleaves synthetic peptide substrates of trypsin. Activates the epithelial sodium channel ENaC. This Mus musculus (Mouse) protein is Serine protease 30 (Prss30).